The following is a 497-amino-acid chain: Peptidoglycan endopeptidase RipA (497 aa).

The first 39 residues, 1–39 (MRRTVRALATRVHGRVCAVPLVVGMLLATALYGGGPAAA), serve as a signal peptide directing secretion. The segment covering 177-192 (ARLAKEKADQAARDAE) has biased composition (basic and acidic residues). Disordered regions lie at residues 177 to 198 (ARLA…QDNA) and 253 to 297 (APAA…GQNW). Positions 255–273 (AAAPAPVPNSAPAPVPGAQ) are enriched in pro residues. The NlpC/P60 domain maps to 365–497 (REAVEYVIRR…TPYVTRLIEY (133 aa)). The active-site Nucleophile is the cysteine 408. Catalysis depends on histidine 457, which acts as the Proton acceptor. Glutamate 469 is an active-site residue.

This sequence belongs to the peptidase C40 family. As to quaternary structure, monomer.

The protein localises to the secreted. Functionally, peptidoglycan endopeptidase that cleaves the bond between D-glutamate and meso-diaminopimelate. Binds and degrades high-molecular weight peptidoglycan. Required for normal separation of daughter cells after cell division and for cell wall integrity. This is Peptidoglycan endopeptidase RipA (ripA) from Mycolicibacterium smegmatis (strain ATCC 700084 / mc(2)155) (Mycobacterium smegmatis).